We begin with the raw amino-acid sequence, 286 residues long: Protein METABOLIC NETWORK MODULATOR 1 (286 aa).

Residues 1 to 10 (MEKESHEENN) are compositionally biased toward basic and acidic residues. 3 disordered regions span residues 1 to 60 (MEKE…DDEA), 123 to 146 (VMHHDGSAKRGRKSRFREKRGSGV), and 181 to 204 (GGERVPIDHSPMQTETGSQASGAS). Basic residues predominate over residues 20–29 (KRKRGRPRKQ). The segment covering 30–39 (LKLESNEHSL) has biased composition (basic and acidic residues). The span at 131 to 140 (KRGRKSRFRE) shows a compositional bias: basic residues. Positions 191-204 (PMQTETGSQASGAS) are enriched in polar residues.

In terms of tissue distribution, mailny observed in young seedlings and in emerging leaves.

Lineage-specific modulator of primary metabolism. Influences flowering time. This chain is Protein METABOLIC NETWORK MODULATOR 1, found in Arabidopsis thaliana (Mouse-ear cress).